Reading from the N-terminus, the 185-residue chain is Ribosome-recycling factor (185 aa).

At K162 the chain carries N6-acetyllysine.

This sequence belongs to the RRF family.

It localises to the cytoplasm. Its function is as follows. Responsible for the release of ribosomes from messenger RNA at the termination of protein biosynthesis. May increase the efficiency of translation by recycling ribosomes from one round of translation to another. The protein is Ribosome-recycling factor of Shigella boydii serotype 18 (strain CDC 3083-94 / BS512).